The following is a 276-amino-acid chain: Glucosamine-6-phosphate deaminase 2 (276 aa).

Residue Asp72 is the Proton acceptor; for enolization step of the active site. The stretch at 103–131 (NAHILDGNAADLQAECDAFEEKIKEAGGI) forms a coiled coil. The active-site For ring-opening step is Asp141. The active-site Proton acceptor; for ring-opening step is His143. Catalysis depends on Glu148, which acts as the For ring-opening step. Thr161 is subject to Phosphothreonine.

Belongs to the glucosamine/galactosamine-6-phosphate isomerase family. As to quaternary structure, homohexamer.

It is found in the cytoplasm. The enzyme catalyses alpha-D-glucosamine 6-phosphate + H2O = beta-D-fructose 6-phosphate + NH4(+). It participates in nucleotide-sugar biosynthesis; UDP-N-acetyl-alpha-D-glucosamine biosynthesis; alpha-D-glucosamine 6-phosphate from D-fructose 6-phosphate: step 1/1. Its activity is regulated as follows. Allosterically activated by N-acetylglucosamine-6-phosphate (GlcNAc6P). Catalyzes the reversible conversion of alpha-D-glucosamine 6-phosphate (GlcN-6P) into beta-D-fructose 6-phosphate (Fru-6P) and ammonium ion, a regulatory reaction step in de novo uridine diphosphate-N-acetyl-alpha-D-glucosamine (UDP-GlcNAc) biosynthesis via hexosamine pathway. Deamination is coupled to aldo-keto isomerization mediating the metabolic flux from UDP-GlcNAc toward Fru-6P. At high ammonium level can drive amination and isomerization of Fru-6P toward hexosamines and UDP-GlcNAc synthesis. Has a role in fine tuning the metabolic fluctuations of cytosolic UDP-GlcNAc and their effects on hyaluronan synthesis that occur during tissue remodeling. The chain is Glucosamine-6-phosphate deaminase 2 from Mus musculus (Mouse).